Consider the following 1441-residue polypeptide: ABC transporter G family member 41 (1441 aa).

The segment covering Met-1–Glu-14 has biased composition (basic and acidic residues). The tract at residues Met-1–Leu-28 is disordered. In terms of domain architecture, ABC transporter 1 spans Ala-159–Glu-432. Gly-192–Thr-199 provides a ligand contact to ATP. The 213-residue stretch at Asp-510–Phe-722 folds into the ABC transmembrane type-2 1 domain. 6 consecutive transmembrane segments (helical) span residues Phe-528–Phe-548, Ser-566–Val-586, Phe-600–Val-620, Phe-642–Cys-662, Ala-672–Ile-692, and Ala-758–Ile-778. Residues Ile-838 to Pro-1090 enclose the ABC transporter 2 domain. Gly-883–Thr-890 is a binding site for ATP. An ABC transmembrane type-2 2 domain is found at Glu-1163 to Phe-1379. 7 consecutive transmembrane segments (helical) span residues Ile-1187–Ile-1207, Gly-1215–Cys-1235, Ile-1272–Tyr-1292, Phe-1300–Ile-1320, Val-1329–Val-1349, Trp-1357–Thr-1377, and Leu-1413–Ile-1433.

This sequence belongs to the ABC transporter superfamily. ABCG family. PDR (TC 3.A.1.205) subfamily.

The protein resides in the membrane. Functionally, may be a general defense protein. In Oryza sativa subsp. japonica (Rice), this protein is ABC transporter G family member 41.